A 516-amino-acid polypeptide reads, in one-letter code: Putative F-box and FNIP repeat-containing protein L414 (516 aa).

An F-box domain is found at isoleucine 4 to phenylalanine 49. FNIP repeat units lie at residues phenylalanine 123–asparagine 165, phenylalanine 166–serine 208, tyrosine 341–glycine 383, tyrosine 385–leucine 428, and tyrosine 429–methionine 470.

In Acanthamoeba polyphaga (Amoeba), this protein is Putative F-box and FNIP repeat-containing protein L414.